A 745-amino-acid polypeptide reads, in one-letter code: Phosphate transporter PHO1 homolog 4 (745 aa).

The SPX domain maps to 1 to 290 (MRFGKEFVSQ…KRNAAKLYME (290 aa)). Over 1–342 (MRFGKEFVSQ…KINKERHLIT (342 aa)) the chain is Cytoplasmic. Residues 343-363 (FSTGFFFGCGISLIVALGLII) form a helical membrane-spanning segment. Topologically, residues 364–383 (HARNIMGTPGQRTYMETMFP) are extracellular. The helical transmembrane segment at 384–404 (LYRFFGFVVLHMDVYAANIYF) threads the bilayer. The Cytoplasmic portion of the chain corresponds to 405 to 427 (WRRYRVNYSFIFGFKQGTELGYR). A helical transmembrane segment spans residues 428 to 448 (HVLLLSFGLGTLSLCAVLLNL). Topologically, residues 449–464 (DMEMDAQTKDYRLVTE) are extracellular. Residues 465-485 (LIPLFLLVLVIIIVLCPFNIL) traverse the membrane as a helical segment. Over 486-615 (YRSSRFFFLS…YTLNRGSNWN (130 aa)) the chain is Cytoplasmic. One can recognise an EXS domain in the interval 550 to 744 (TSNIGFRTFY…NYEEDGDHHN (195 aa)). A helical transmembrane segment spans residues 616-636 (ITAWVFSGVATFYGTYWDIVL). Topologically, residues 637–660 (DWGLLQRGCKNSFLRDKLLVPHKT) are extracellular. The chain crosses the membrane as a helical span at residues 661–681 (VYYAAMVLNVLLRLVWLQTVL). The Cytoplasmic portion of the chain corresponds to 682 to 745 (DLKFSFLHRE…YEEDGDHHNN (64 aa)).

This sequence belongs to the SYG1 (TC 2.A.94) family. Expressed in root epidermis and cortex, leaf hydathodes, pollen grains and stigma apex.

The protein localises to the cell membrane. Its function is as follows. May transport inorganic phosphate (Pi). The chain is Phosphate transporter PHO1 homolog 4 (PHO1-H4) from Arabidopsis thaliana (Mouse-ear cress).